We begin with the raw amino-acid sequence, 202 residues long: Xanthine phosphoribosyltransferase (202 aa).

2 residues coordinate xanthine: Leu20 and Asn27. Ala128–Thr132 contacts 5-phospho-alpha-D-ribose 1-diphosphate. Lys156 lines the xanthine pocket.

Belongs to the purine/pyrimidine phosphoribosyltransferase family. Xpt subfamily. Homodimer.

The protein resides in the cytoplasm. It carries out the reaction XMP + diphosphate = xanthine + 5-phospho-alpha-D-ribose 1-diphosphate. The protein operates within purine metabolism; XMP biosynthesis via salvage pathway; XMP from xanthine: step 1/1. In terms of biological role, converts the preformed base xanthine, a product of nucleic acid breakdown, to xanthosine 5'-monophosphate (XMP), so it can be reused for RNA or DNA synthesis. The polypeptide is Xanthine phosphoribosyltransferase (Deinococcus geothermalis (strain DSM 11300 / CIP 105573 / AG-3a)).